An 87-amino-acid chain; its full sequence is NAD(P)H-quinone oxidoreductase subunit O (87 aa).

Residues 1 to 10 (MSEQTGKVDD) show a composition bias toward basic and acidic residues. A disordered region spans residues 1–26 (MSEQTGKVDDSQSPPKVQKKLRKGDL).

Belongs to the complex I NdhO subunit family. In terms of assembly, NDH-1 can be composed of about 15 different subunits; different subcomplexes with different compositions have been identified which probably have different functions.

It is found in the cellular thylakoid membrane. The enzyme catalyses a plastoquinone + NADH + (n+1) H(+)(in) = a plastoquinol + NAD(+) + n H(+)(out). The catalysed reaction is a plastoquinone + NADPH + (n+1) H(+)(in) = a plastoquinol + NADP(+) + n H(+)(out). Functionally, NDH-1 shuttles electrons from an unknown electron donor, via FMN and iron-sulfur (Fe-S) centers, to quinones in the respiratory and/or the photosynthetic chain. The immediate electron acceptor for the enzyme in this species is believed to be plastoquinone. Couples the redox reaction to proton translocation, and thus conserves the redox energy in a proton gradient. Cyanobacterial NDH-1 also plays a role in inorganic carbon-concentration. The protein is NAD(P)H-quinone oxidoreductase subunit O of Prochlorococcus marinus (strain NATL1A).